We begin with the raw amino-acid sequence, 478 residues long: Alpha-1,3-mannosyl-glycoprotein 4-beta-N-acetylglucosaminyltransferase C (478 aa).

Over 1-25 (MLKFYQMKYIFQILDKMRCLRKRST) the chain is Cytoplasmic. The helical; Signal-anchor for type II membrane protein transmembrane segment at 26 to 43 (VSFLGVLVVFLLFMNLYI) threads the bilayer. Residues 44-478 (EDSYVLEGDK…IIRSISIWTS (435 aa)) lie on the Lumenal side of the membrane. Residues Asn84 and Asn215 are each glycosylated (N-linked (GlcNAc...) asparagine).

It belongs to the glycosyltransferase 54 family. A divalent metal cation serves as cofactor.

The protein localises to the golgi apparatus membrane. The catalysed reaction is N(4)-{beta-D-GlcNAc-(1-&gt;2)-alpha-D-Man-(1-&gt;3)-[beta-D-GlcNAc-(1-&gt;2)-alpha-D-Man-(1-&gt;6)]-beta-D-Man-(1-&gt;4)-beta-D-GlcNAc-(1-&gt;4)-beta-D-GlcNAc}-L-asparaginyl-[protein] + UDP-N-acetyl-alpha-D-glucosamine = N(4)-{beta-D-GlcNAc-(1-&gt;2)-[beta-D-GlcNAc-(1-&gt;4)]-alpha-D-Man-(1-&gt;3)-[beta-D-GlcNAc-(1-&gt;2)-alpha-D-Man-(1-&gt;6)]-beta-D-Man-(1-&gt;4)-beta-D-GlcNAc-(1-&gt;4)-beta-D-GlcNAc}-L-asparaginyl-[protein] + UDP + H(+). It functions in the pathway protein modification; protein glycosylation. Glycosyltransferase that participates in the transfer of N-acetylglucosamine (GlcNAc) to the core mannose residues of N-linked glycans. Catalyzes the formation of the GlcNAcbeta1-4 branch on the GlcNAcbeta1-2Manalpha1-3 arm of the core structure of N-linked glycans. Essential for the production of tri- and tetra-antennary N-linked sugar chains. Does not catalyze the transfer of GlcNAc to the Manalpha1-6 arm to form GlcNAcBeta1-4Manalpha1-6 linkage ('GnT-VI' activity). The sequence is that of Alpha-1,3-mannosyl-glycoprotein 4-beta-N-acetylglucosaminyltransferase C (Mgat4c) from Mus musculus (Mouse).